The following is a 430-amino-acid chain: Phosphomethylpyrimidine synthase (430 aa).

Substrate contacts are provided by residues asparagine 67, methionine 96, tyrosine 125, histidine 161, 183–185, 224–227, and glutamate 263; these read SRG and DALR. Histidine 267 provides a ligand contact to Zn(2+). Tyrosine 290 serves as a coordination point for substrate. Histidine 331 provides a ligand contact to Zn(2+). [4Fe-4S] cluster is bound by residues cysteine 406, cysteine 409, and cysteine 413.

This sequence belongs to the ThiC family. In terms of assembly, homodimer. It depends on [4Fe-4S] cluster as a cofactor.

The catalysed reaction is 5-amino-1-(5-phospho-beta-D-ribosyl)imidazole + S-adenosyl-L-methionine = 4-amino-2-methyl-5-(phosphooxymethyl)pyrimidine + CO + 5'-deoxyadenosine + formate + L-methionine + 3 H(+). Its pathway is cofactor biosynthesis; thiamine diphosphate biosynthesis. In terms of biological role, catalyzes the synthesis of the hydroxymethylpyrimidine phosphate (HMP-P) moiety of thiamine from aminoimidazole ribotide (AIR) in a radical S-adenosyl-L-methionine (SAM)-dependent reaction. The chain is Phosphomethylpyrimidine synthase from Campylobacter jejuni subsp. jejuni serotype O:6 (strain 81116 / NCTC 11828).